A 229-amino-acid chain; its full sequence is Lactate utilization protein C (229 aa).

The protein belongs to the LutC/YkgG family.

Functionally, is involved in L-lactate degradation and allows cells to grow with lactate as the sole carbon source. The protein is Lactate utilization protein C of Shouchella clausii (strain KSM-K16) (Alkalihalobacillus clausii).